The sequence spans 187 residues: Peptide deformylase (187 aa).

The Fe cation site is built by C96 and H138. The active site involves E139. A Fe cation-binding site is contributed by H142.

The protein belongs to the polypeptide deformylase family. It depends on Fe(2+) as a cofactor.

It carries out the reaction N-terminal N-formyl-L-methionyl-[peptide] + H2O = N-terminal L-methionyl-[peptide] + formate. Functionally, removes the formyl group from the N-terminal Met of newly synthesized proteins. Requires at least a dipeptide for an efficient rate of reaction. N-terminal L-methionine is a prerequisite for activity but the enzyme has broad specificity at other positions. This is Peptide deformylase from Brachyspira hyodysenteriae (strain ATCC 49526 / WA1).